We begin with the raw amino-acid sequence, 307 residues long: Mitochondrial thiamine pyrophosphate carrier 1 (307 aa).

3 Solcar repeats span residues 13–95 (VSTT…IGSF), 105–190 (SPQL…IKIF), and 203–305 (PFTL…FMNK). A run of 6 helical transmembrane segments spans residues 19–36 (LVAGSLSGLFARTCIAPL), 76–96 (IMYIIYGGAQFGSYTYIGSFL), 108–126 (LYSCLVGSLAGMTSSLASY), 160–184 (MGFFSGCGSSMINIGLNTAIMFGVY), 210–226 (LAGPISGFTSKLATFPL), and 280–297 (GVTMSLIKSVPSTAISLW).

This sequence belongs to the mitochondrial carrier (TC 2.A.29) family.

It localises to the mitochondrion inner membrane. Functionally, mitochondrial transporter that mediates uptake of thiamine pyrophosphate (ThPP) into mitochondria. The sequence is that of Mitochondrial thiamine pyrophosphate carrier 1 (TPC1) from Candida glabrata (strain ATCC 2001 / BCRC 20586 / JCM 3761 / NBRC 0622 / NRRL Y-65 / CBS 138) (Yeast).